Here is an 800-residue protein sequence, read N- to C-terminus: Ent-copalyl diphosphate synthase 2 (800 aa).

A disordered region spans residues 52–80 (QGQETRERRQLDDDEHARPPQGGDDDVAA). Positions 55–69 (ETRERRQLDDDEHAR) are enriched in basic and acidic residues. A substrate-binding site is contributed by K242. Residues D374 and D376 each coordinate Mg(2+). The short motif at 374-377 (DIDD) is the DXDD motif element. K461 is a binding site for substrate.

The protein belongs to the terpene synthase family. Mg(2+) serves as cofactor.

It carries out the reaction (2E,6E,10E)-geranylgeranyl diphosphate = ent-copalyl diphosphate. Functionally, catalyzes the conversion of geranylgeranyl diphosphate to the phytoalexin precursor ent-copalyl diphosphate. This chain is Ent-copalyl diphosphate synthase 2 (CPS2), found in Oryza sativa subsp. indica (Rice).